A 49-amino-acid polypeptide reads, in one-letter code: Large ribosomal subunit protein bL33A (49 aa).

Residues 21-49 (KNKRNNPERVEMKKYCSRDNKHTLHRETK) are disordered. The span at 25–49 (NNPERVEMKKYCSRDNKHTLHRETK) shows a compositional bias: basic and acidic residues.

This sequence belongs to the bacterial ribosomal protein bL33 family.

The sequence is that of Large ribosomal subunit protein bL33A from Staphylococcus epidermidis (strain ATCC 35984 / DSM 28319 / BCRC 17069 / CCUG 31568 / BM 3577 / RP62A).